The following is a 273-amino-acid chain: Putative B3 domain-containing protein At5g58280 (273 aa).

The TF-B3 DNA-binding region spans 127–218 (FVKSMVRSHV…KFKIYVFKGN (92 aa)). The segment at 225 to 273 (SARKRGRATTPSEEEEEEEDKDVEESGDEEHSSRATKRSSVRLLRKRKA) is disordered. The segment covering 236–252 (SEEEEEEEDKDVEESGD) has biased composition (acidic residues). Positions 258-273 (RATKRSSVRLLRKRKA) are enriched in basic residues.

The protein localises to the nucleus. The polypeptide is Putative B3 domain-containing protein At5g58280 (Arabidopsis thaliana (Mouse-ear cress)).